We begin with the raw amino-acid sequence, 147 residues long: Neocarzinostatin (147 aa).

Positions 1–34 (MVPISIIRNRVAKVAVGSAAVLGLAVGFQTPAVA) are cleaved as a signal peptide. 2 cysteine pairs are disulfide-bonded: C71/C81 and C122/C127.

This sequence belongs to the neocarzinostatin family.

Functionally, NCS has antibiotic activity (for Gram-positive bacteria) and antitumor activity (for certain mouse tumors). NCS binds non-covalently to a chromophore which is the cytotoxic and mutagenic component of the antibiotic. The chromophore binds to DNA as a weak intercalator and causes single- and double-strand breaks. This Streptomyces carzinostaticus protein is Neocarzinostatin (ncsA).